The primary structure comprises 310 residues: p-hydroxybenzoic acid efflux pump subunit AaeA (310 aa).

The chain crosses the membrane as a helical span at residues 12–32 (AITVVLVILAFIAIFNAWVYY).

The protein belongs to the membrane fusion protein (MFP) (TC 8.A.1) family.

Its subcellular location is the cell inner membrane. Forms an efflux pump with AaeB. The polypeptide is p-hydroxybenzoic acid efflux pump subunit AaeA (Shigella sonnei (strain Ss046)).